The sequence spans 179 residues: Diphosphoinositol polyphosphate phosphohydrolase 2 (179 aa).

Substrate-binding positions include Arg9, 17–19 (KKR), and 38–40 (SSR). The Nudix hydrolase domain maps to 17–143 (KKRAACLCFR…VHAEYLERLK (127 aa)). Mg(2+) contacts are provided by Gly49 and Glu65. Residues 50–71 (GGVEPEEEPGGAAAREVYEEAG) carry the Nudix box motif. The Proton acceptor role is filled by Glu68. Glu69 is a Mg(2+) binding site. Substrate is bound by residues 88-90 (RKH), Arg114, and Lys132.

This sequence belongs to the Nudix hydrolase family. DIPP subfamily. Mg(2+) is required as a cofactor. The cofactor is Mn(2+).

The protein resides in the cytoplasm. The enzyme catalyses diphospho-myo-inositol polyphosphate + H2O = myo-inositol polyphosphate + phosphate.. It catalyses the reaction 5-diphospho-1D-myo-inositol 1,2,3,4,6-pentakisphosphate + H2O = 1D-myo-inositol hexakisphosphate + phosphate + H(+). The catalysed reaction is 3,5-bis(diphospho)-1D-myo-inositol 1,2,4,6-tetrakisphosphate + H2O = 3-diphospho-1D-myo-inositol 1,2,4,5,6-pentakisphosphate + phosphate + 2 H(+). It carries out the reaction 5-diphospho-1D-myo-inositol 1,3,4,6-tetrakisphosphate + H2O = 1D-myo-inositol 1,3,4,5,6-pentakisphosphate + phosphate + H(+). The enzyme catalyses P(1),P(6)-bis(5'-adenosyl) hexaphosphate + H2O = 2 ATP + 2 H(+). It catalyses the reaction P(1),P(5)-bis(5'-adenosyl) pentaphosphate + H2O = ADP + ATP + 2 H(+). The catalysed reaction is 5-phospho-alpha-D-ribose 1-diphosphate + H2O = alpha-D-ribose 1,5-bisphosphate + phosphate + H(+). Functionally, cleaves the beta-phosphate from diphosphoinositol polyphosphates such as PP-InsP5 (diphosphoinositol pentakisphosphate), PP-InsP4 (diphosphoinositol tetrakisphosphate) and [PP]2-InsP4 (bisdiphosphoinositol tetrakisphosphate), suggesting that it may play a role in signal transduction. Diadenosine polyphosphates, particularly Ap6A (P(1),P(6)-bis(5a-adenosyl) hexaphosphate) and Ap5A (P(1),P(5)-bis(5'-adenosyl) pentaphosphate) are downstream effectors of a signaling cascade that regulates cardiac KATP channels, can also be substrates, although with lower preference than the diphosphoinositol polyphosphates. Can also catalyze the hydrolysis of 5-phosphoribose 1-diphosphate, generating the glycolytic activator ribose 1,5-bisphosphate. Does not play a role in U8 snoRNA decapping activity. Binds U8 snoRNA. This is Diphosphoinositol polyphosphate phosphohydrolase 2 from Rattus norvegicus (Rat).